A 65-amino-acid polypeptide reads, in one-letter code: Photosystem II reaction center protein Z (65 aa).

A run of 2 helical transmembrane segments spans residues 8-28 (AVFALVLLSFVLIVAVPVALA) and 41-61 (YAGAALWTSLIIVIGVLDSVV).

This sequence belongs to the PsbZ family. In terms of assembly, PSII is composed of 1 copy each of membrane proteins PsbA, PsbB, PsbC, PsbD, PsbE, PsbF, PsbH, PsbI, PsbJ, PsbK, PsbL, PsbM, PsbT, PsbX, PsbY, PsbZ, Psb30/Ycf12, at least 3 peripheral proteins of the oxygen-evolving complex and a large number of cofactors. It forms dimeric complexes.

It localises to the plastid. It is found in the cyanelle thylakoid membrane. Its function is as follows. May control the interaction of photosystem II (PSII) cores with the light-harvesting antenna, regulates electron flow through the 2 photosystem reaction centers. PSII is a light-driven water plastoquinone oxidoreductase, using light energy to abstract electrons from H(2)O, generating a proton gradient subsequently used for ATP formation. This chain is Photosystem II reaction center protein Z, found in Cyanophora paradoxa.